The following is a 737-amino-acid chain: Ribosome-releasing factor 2, mitochondrial (737 aa).

The transit peptide at 1 to 36 directs the protein to the mitochondrion; it reads MLCNRLHKAAFAARLRPRLPATVASCRQVHNSDGTI. In terms of domain architecture, tr-type G spans 39–318; it reads KRIRNIGILA…SVLNFLPAPS (280 aa). GTP contacts are provided by residues 48 to 55, 112 to 116, and 166 to 169; these read AHIDAGKT, DTPGH, and NKMD.

It belongs to the TRAFAC class translation factor GTPase superfamily. Classic translation factor GTPase family. EF-G/EF-2 subfamily.

Its subcellular location is the mitochondrion. Functionally, mitochondrial GTPase that mediates the disassembly of ribosomes from messenger RNA at the termination of mitochondrial protein biosynthesis. Not involved in the GTP-dependent ribosomal translocation step during translation elongation. The sequence is that of Ribosome-releasing factor 2, mitochondrial from Anopheles gambiae (African malaria mosquito).